A 358-amino-acid polypeptide reads, in one-letter code: Phenylalanine--tRNA ligase alpha subunit (358 aa).

Glu-279 is a binding site for Mg(2+).

It belongs to the class-II aminoacyl-tRNA synthetase family. Phe-tRNA synthetase alpha subunit type 1 subfamily. Tetramer of two alpha and two beta subunits. Requires Mg(2+) as cofactor.

It is found in the cytoplasm. The catalysed reaction is tRNA(Phe) + L-phenylalanine + ATP = L-phenylalanyl-tRNA(Phe) + AMP + diphosphate + H(+). In Variovorax paradoxus (strain S110), this protein is Phenylalanine--tRNA ligase alpha subunit.